We begin with the raw amino-acid sequence, 91 residues long: Small ribosomal subunit protein uS17 (91 aa).

It belongs to the universal ribosomal protein uS17 family. As to quaternary structure, part of the 30S ribosomal subunit.

One of the primary rRNA binding proteins, it binds specifically to the 5'-end of 16S ribosomal RNA. The polypeptide is Small ribosomal subunit protein uS17 (Malacoplasma penetrans (strain HF-2) (Mycoplasma penetrans)).